A 180-amino-acid chain; its full sequence is V-type proton ATPase subunit c''1 (180 aa).

Residues 1–26 are Lumenal-facing; that stretch reads MSGVVALGHASSWGAALVRISPYTFS. Residues 27 to 47 form a helical membrane-spanning segment; it reads AIGIAISIGVSVLGAAWGIYI. At 48-66 the chain is on the cytoplasmic side; the sequence is TGSSLIGAAIEAPRITSKN. A helical transmembrane segment spans residues 67 to 87; the sequence is LISVIFCEAVAIYGVIVAIIL. Topologically, residues 88–110 are lumenal; sequence QTKLESVPSSKMYDAESLRAGYA. Residues 111 to 131 form a helical membrane-spanning segment; that stretch reads IFASGIIVGFANLVCGLCVGI. The Cytoplasmic segment spans residues 132 to 149; sequence IGSSCALSDAQNSTLFVK. Residues 150–170 traverse the membrane as a helical segment; it reads ILVIEIFGSALGLFGVIVGII. At 171–180 the chain is on the lumenal side; sequence MSAQATWPTK.

Belongs to the V-ATPase proteolipid subunit family. V-ATPase is a heteromultimeric enzyme composed of a peripheral catalytic V1 complex (components A to H) attached to an integral membrane V0 proton pore complex (components: a, c, c'', d and e). The proteolipid components c and c'' are present as a hexameric ring that forms the proton-conducting pore. In terms of tissue distribution, preferentially expressed in roots.

Its subcellular location is the endoplasmic reticulum membrane. The protein localises to the golgi apparatus membrane. Proton-conducting pore forming subunit of the membrane integral V0 complex of vacuolar ATPase. V-ATPase is responsible for acidifying a variety of intracellular compartments in eukaryotic cells. The sequence is that of V-type proton ATPase subunit c''1 (VHA-c''1) from Arabidopsis thaliana (Mouse-ear cress).